The chain runs to 646 residues: Protein kinase YegI (646 aa).

Positions valine 13 to leucine 300 constitute a Protein kinase domain. Residues leucine 19–valine 27 and lysine 39 contribute to the ATP site. Aspartate 141 serves as the catalytic Proton acceptor.

Autophosphorylated.

In terms of biological role, probable serine/threonine kinase. This is Protein kinase YegI (yegI) from Escherichia coli O157:H7.